The following is a 280-amino-acid chain: Diaminopimelate epimerase (280 aa).

Substrate-binding residues include Asn-15 and Asn-66. The Proton donor role is filled by Cys-75. Substrate is bound by residues 76-77 (GN), Asn-163, Asn-196, and 214-215 (ER). Cys-223 functions as the Proton acceptor in the catalytic mechanism. 224–225 (GT) is a substrate binding site.

The protein belongs to the diaminopimelate epimerase family. Homodimer.

Its subcellular location is the cytoplasm. The enzyme catalyses (2S,6S)-2,6-diaminopimelate = meso-2,6-diaminopimelate. The protein operates within amino-acid biosynthesis; L-lysine biosynthesis via DAP pathway; DL-2,6-diaminopimelate from LL-2,6-diaminopimelate: step 1/1. Its function is as follows. Catalyzes the stereoinversion of LL-2,6-diaminopimelate (L,L-DAP) to meso-diaminopimelate (meso-DAP), a precursor of L-lysine and an essential component of the bacterial peptidoglycan. This chain is Diaminopimelate epimerase, found in Phocaeicola vulgatus (strain ATCC 8482 / DSM 1447 / JCM 5826 / CCUG 4940 / NBRC 14291 / NCTC 11154) (Bacteroides vulgatus).